Here is a 203-residue protein sequence, read N- to C-terminus: A-type ATP synthase subunit E (203 aa).

Belongs to the V-ATPase E subunit family. As to quaternary structure, might form a homodimer. Interacts with subunit H via residues 41-60. The A-type ATPase is composed of subunits A(3), B(3), C, D, E(1 or 2), F, H(2), I and K(x).

It is found in the cell membrane. Component of the A-type ATP synthase that produces ATP from ADP in the presence of a proton gradient across the membrane. This chain is A-type ATP synthase subunit E, found in Methanocaldococcus jannaschii (strain ATCC 43067 / DSM 2661 / JAL-1 / JCM 10045 / NBRC 100440) (Methanococcus jannaschii).